Here is a 64-residue protein sequence, read N- to C-terminus: Large ribosomal subunit protein bL35 (64 aa).

This sequence belongs to the bacterial ribosomal protein bL35 family.

This is Large ribosomal subunit protein bL35 from Shewanella sediminis (strain HAW-EB3).